Reading from the N-terminus, the 422-residue chain is Serine--tRNA ligase (422 aa).

Position 231–233 (231–233) interacts with L-serine; sequence TSE. An ATP-binding site is contributed by 262–264; the sequence is RQE. E285 contacts L-serine. ATP is bound at residue 349-352; that stretch reads EISS. Residue S384 coordinates L-serine.

This sequence belongs to the class-II aminoacyl-tRNA synthetase family. Type-1 seryl-tRNA synthetase subfamily. In terms of assembly, homodimer. The tRNA molecule binds across the dimer.

The protein resides in the cytoplasm. It catalyses the reaction tRNA(Ser) + L-serine + ATP = L-seryl-tRNA(Ser) + AMP + diphosphate + H(+). The enzyme catalyses tRNA(Sec) + L-serine + ATP = L-seryl-tRNA(Sec) + AMP + diphosphate + H(+). The protein operates within aminoacyl-tRNA biosynthesis; selenocysteinyl-tRNA(Sec) biosynthesis; L-seryl-tRNA(Sec) from L-serine and tRNA(Sec): step 1/1. Catalyzes the attachment of serine to tRNA(Ser). Is also able to aminoacylate tRNA(Sec) with serine, to form the misacylated tRNA L-seryl-tRNA(Sec), which will be further converted into selenocysteinyl-tRNA(Sec). The sequence is that of Serine--tRNA ligase from Mycoplasma mycoides subsp. mycoides SC (strain CCUG 32753 / NCTC 10114 / PG1).